Reading from the N-terminus, the 369-residue chain is Somatostatin receptor type 2 (369 aa).

Topologically, residues 1–43 (MEMSSEQLNGSQVWVSSPFDLNGSLGPSNGSNQTEPYYDMTSN) are extracellular. N-linked (GlcNAc...) asparagine glycans are attached at residues Asn9, Asn22, Asn29, and Asn32. A helical membrane pass occupies residues 44–67 (AVLTFIYFVVCVVGLCGNTLVIYV). Residues 68–78 (ILRYAKMKTIT) lie on the Cytoplasmic side of the membrane. A helical membrane pass occupies residues 79 to 103 (NIYILNLAIADELFMLGLPFLAMQV). Residues 104-118 (ALVHWPFGKAICRVV) are Extracellular-facing. Cys115 and Cys193 are joined by a disulfide. Residues 119 to 138 (MTVDGINQFTSIFCLTVMSI) traverse the membrane as a helical segment. Topologically, residues 139-161 (DRYLAVVHPIKSAKWRRPRTAKM) are cytoplasmic. Residues 162 to 181 (INVAVWCVSLLVILPIMIYA) form a helical membrane-spanning segment. Residues 182–207 (GLRSNQWGRSSCTINWPGESGAWYTG) lie on the Extracellular side of the membrane. Residues 208-229 (FIIYAFILGFLVPLTIICLCYL) form a helical membrane-spanning segment. Residues 230–253 (FIIIKVKSSGIRVGSSKRKKSEKK) lie on the Cytoplasmic side of the membrane. Residues 254–278 (VTRMVSIVVAVFIFCWLPFYIFNVS) traverse the membrane as a helical segment. The Extracellular portion of the chain corresponds to 279-288 (SVSVAISPTP). A helical membrane pass occupies residues 289-303 (ALKGMFDFVVILTYA). The Cytoplasmic portion of the chain corresponds to 304–369 (NSCANPILYA…LLNGDLQTSI (66 aa)). A lipid anchor (S-palmitoyl cysteine) is attached at Cys328. Ser341, Ser343, and Ser348 each carry phosphoserine. Phosphothreonine is present on residues Thr353 and Thr354.

This sequence belongs to the G-protein coupled receptor 1 family. Homodimer and heterodimer with SSTR3 and SSTR5. Heterodimerization with SSTR3 inactivates SSTR3 receptor function. Heterodimerization with SSTR5 is enhanced by agonist stimulation of SSTR2 and increases SSTR2 cell growth inhibition activity. Following agonist stimulation, homodimers dissociate into monomers which is required for receptor internalization. Interacts with beta-arrestin; this interaction is necessary for receptor internalization and is destabilized by heterodimerization with SSTR5 which results in increased recycling of SSTR2 to the cell surface. Interacts (via C-terminus) with SHANK1 (via PDZ domain). In terms of processing, phosphorylated on serine and threonine residues in response to agonist stimulation, leading to receptor desensitization and rapid internalization. Phosphorylated to a greater extent on serine than threonine residues. Threonine phosphorylation is required for arrestin binding and receptor endocytosis but is not necessary for desensitization. Cerebrum and kidney.

The protein resides in the cell membrane. Its subcellular location is the cytoplasm. Receptor for somatostatin-14 and -28. This receptor is coupled via pertussis toxin sensitive G proteins to inhibition of adenylyl cyclase. In addition it stimulates phosphotyrosine phosphatase and PLC via pertussis toxin insensitive as well as sensitive G proteins. Inhibits calcium entry by suppressing voltage-dependent calcium channels. Acts as the functionally dominant somatostatin receptor in pancreatic alpha- and beta-cells where it mediates the inhibitory effect of somatostatin-14 on hormone secretion. Inhibits cell growth through enhancement of MAPK1 and MAPK2 phosphorylation and subsequent up-regulation of CDKN1B. Stimulates neuronal migration and axon outgrowth and may participate in neuron development and maturation during brain development. Mediates negative regulation of insulin receptor signaling through PTPN6. Inactivates SSTR3 receptor function following heterodimerization. The chain is Somatostatin receptor type 2 (Sstr2) from Mus musculus (Mouse).